The chain runs to 523 residues: Acetyl-coenzyme A carboxylase carboxyl transferase subunit beta, chloroplastic (523 aa).

Positions 224-523 (FWVICENCHK…FVPSNQNSIK (300 aa)) constitute a CoA carboxyltransferase N-terminal domain. 4 residues coordinate Zn(2+): cysteine 228, cysteine 231, cysteine 247, and cysteine 250. The segment at 228-250 (CENCHKFNYKRLFKSKMNICEEC) adopts a C4-type zinc-finger fold.

The protein belongs to the AccD/PCCB family. As to quaternary structure, acetyl-CoA carboxylase is a heterohexamer composed of biotin carboxyl carrier protein, biotin carboxylase and 2 subunits each of ACCase subunit alpha and ACCase plastid-coded subunit beta (accD). Requires Zn(2+) as cofactor.

It is found in the plastid. It localises to the chloroplast stroma. The enzyme catalyses N(6)-carboxybiotinyl-L-lysyl-[protein] + acetyl-CoA = N(6)-biotinyl-L-lysyl-[protein] + malonyl-CoA. The protein operates within lipid metabolism; malonyl-CoA biosynthesis; malonyl-CoA from acetyl-CoA: step 1/1. Component of the acetyl coenzyme A carboxylase (ACC) complex. Biotin carboxylase (BC) catalyzes the carboxylation of biotin on its carrier protein (BCCP) and then the CO(2) group is transferred by the transcarboxylase to acetyl-CoA to form malonyl-CoA. The sequence is that of Acetyl-coenzyme A carboxylase carboxyl transferase subunit beta, chloroplastic from Cucumis sativus (Cucumber).